The primary structure comprises 765 residues: Amyloid beta precursor like protein 2 (765 aa).

A signal peptide spans 1–31 (MAATGTAAAAATGKLLVLLLLGLTAPAAALA). The Extracellular segment spans residues 32 to 695 (GYIEALAANA…LREDFSLSSS (664 aa)). Residues 46 to 139 (AVAEPQIAMF…PFKCLVGEFV (94 aa)) are GFLD subdomain. The E1 domain maps to 46–205 (AVAEPQIAMF…HGTEYVCCPQ (160 aa)). Intrachain disulfides connect Cys-56–Cys-80, Cys-91–Cys-133, Cys-116–Cys-123, Cys-149–Cys-203, Cys-160–Cys-190, and Cys-174–Cys-202. The interval 147–205 (ENCQFFHQERMEVCEKHQRWHTVVKEACLTEGMTLYSYGMLLPCGVDQFHGTEYVCCPQ) is cuBD subdomain. His-163, His-167, and Tyr-184 together coordinate Cu cation. A disordered region spans residues 211–301 (SDSTMSKEEE…EPSSDGTISD (91 aa)). A Phosphoserine modification is found at Ser-216. 2 stretches are compositionally biased toward acidic residues: residues 218-231 (EEEE…EEDY) and 240-271 (TEAD…EVVE). Over residues 272 to 284 (DRDYYYDSFKGDD) the composition is skewed to basic and acidic residues. Residues 308-366 (VKAVCSQEAMTGPCRAVMPRWYFDLSKGKCVRFIYGGCGGNRNNFESEDYCMAVCKTMI) form the BPTI/Kunitz inhibitor domain. 3 disulfides stabilise this stretch: Cys-312–Cys-362, Cys-321–Cys-345, and Cys-337–Cys-358. Positions 375-566 (DVDVYFETSA…QEIQEEIDEL (192 aa)) constitute an E2 domain. A Phosphoserine modification is found at Ser-592. The segment at 597-616 (EIPPFHPFHPFPSLSENEDT) is disordered. Ser-628 is a glycosylation site (O-linked (Xyl...) (chondroitin sulfate) serine). The chain crosses the membrane as a helical span at residues 696–718 (ALIGLLVIAVAIATVIVISLVML). Over 719-765 (RKRQYGTISHGIVEVHPMLTPEERHLNKMQNHGYENPTYKYLEQMQI) the chain is Cytoplasmic. The tract at residues 751–765 (GYENPTYKYLEQMQI) is interaction with DAB2. Residues 752–757 (YENPTY) carry the NPXY motif motif.

This sequence belongs to the APP family. As to quaternary structure, interacts with CPEB1. Interacts (via NPXY motif) with DAB2 (via PID domain); the interaction is impaired by tyrosine phosphorylation of the NPXY motif. Interacts (via cytoplasmic domain) with APBB2/FE65L. Interacts (via intracellular domain) with APBB3/FE65L2.

Its subcellular location is the membrane. May play a role in the regulation of hemostasis. The soluble form may have inhibitory properties towards coagulation factors. May interact with cellular G-protein signaling pathways. May bind to the DNA 5'-GTCACATG-3'(CDEI box). Inhibits trypsin, chymotrypsin, plasmin, factor XIA and plasma and glandular kallikrein. Modulates the Cu/Zn nitric oxide-catalyzed autodegradation of GPC1 heparan sulfate side chains in fibroblasts. The sequence is that of Amyloid beta precursor like protein 2 from Rattus norvegicus (Rat).